The primary structure comprises 219 residues: tRNA (guanine-N(7)-)-methyltransferase (219 aa).

S-adenosyl-L-methionine is bound by residues Glu44, Asp69, Glu102, and Asn125. The substrate site is built by Lys129 and Asp161.

Belongs to the class I-like SAM-binding methyltransferase superfamily. TrmB family.

It carries out the reaction guanosine(46) in tRNA + S-adenosyl-L-methionine = N(7)-methylguanosine(46) in tRNA + S-adenosyl-L-homocysteine. It participates in tRNA modification; N(7)-methylguanine-tRNA biosynthesis. Functionally, catalyzes the formation of N(7)-methylguanine at position 46 (m7G46) in tRNA. This is tRNA (guanine-N(7)-)-methyltransferase from Clostridium perfringens (strain 13 / Type A).